The chain runs to 100 residues: Large ribosomal subunit protein uL23 (100 aa).

It belongs to the universal ribosomal protein uL23 family. Part of the 50S ribosomal subunit. Contacts protein L29, and trigger factor when it is bound to the ribosome.

One of the early assembly proteins it binds 23S rRNA. One of the proteins that surrounds the polypeptide exit tunnel on the outside of the ribosome. Forms the main docking site for trigger factor binding to the ribosome. This is Large ribosomal subunit protein uL23 from Buchnera aphidicola subsp. Baizongia pistaciae (strain Bp).